The primary structure comprises 158 residues: Ribosome maturation factor RimP (158 aa).

Belongs to the RimP family.

The protein resides in the cytoplasm. Functionally, required for maturation of 30S ribosomal subunits. In Pseudomonas fluorescens (strain ATCC BAA-477 / NRRL B-23932 / Pf-5), this protein is Ribosome maturation factor RimP.